Consider the following 55-residue polypeptide: Large ribosomal subunit protein bL33 (55 aa).

The protein belongs to the bacterial ribosomal protein bL33 family.

This Bartonella bacilliformis (strain ATCC 35685 / KC583 / Herrer 020/F12,63) protein is Large ribosomal subunit protein bL33.